The sequence spans 592 residues: Aspartate--tRNA(Asp/Asn) ligase (592 aa).

Glutamate 182 contacts L-aspartate. The segment at 206 to 209 is aspartate; sequence QIFK. Arginine 228 contacts L-aspartate. ATP contacts are provided by residues 228–230 and glutamine 237; that span reads RDE. Residue histidine 455 participates in L-aspartate binding. Glutamate 489 serves as a coordination point for ATP. Residue arginine 496 participates in L-aspartate binding. 541-544 lines the ATP pocket; that stretch reads GLDR.

It belongs to the class-II aminoacyl-tRNA synthetase family. Type 1 subfamily. Homodimer.

It is found in the cytoplasm. The enzyme catalyses tRNA(Asx) + L-aspartate + ATP = L-aspartyl-tRNA(Asx) + AMP + diphosphate. Functionally, aspartyl-tRNA synthetase with relaxed tRNA specificity since it is able to aspartylate not only its cognate tRNA(Asp) but also tRNA(Asn). Reaction proceeds in two steps: L-aspartate is first activated by ATP to form Asp-AMP and then transferred to the acceptor end of tRNA(Asp/Asn). This chain is Aspartate--tRNA(Asp/Asn) ligase, found in Thermoanaerobacter pseudethanolicus (strain ATCC 33223 / 39E) (Clostridium thermohydrosulfuricum).